We begin with the raw amino-acid sequence, 162 residues long: Caveolin-2 (162 aa).

Residues 1-86 (MGLETEKADV…FEMSKYVIYK (86 aa)) lie on the Cytoplasmic side of the membrane. Residue Tyr19 is modified to Phosphotyrosine; by SRC. Residues Ser20 and Ser23 each carry the phosphoserine modification. Tyr27 carries the phosphotyrosine; by SRC modification. An intramembrane region (helical) is located at residues 87 to 107 (FLTVFLAIPLAFAAGILFATL). The Cytoplasmic segment spans residues 108–162 (SCLHIWIIMPFVKTCLMVLPSVQTIWKSVTDVVIAPLCTSIGRSFSSVSLQLSHD).

The protein belongs to the caveolin family. As to quaternary structure, monomer or homodimer. Interacts with CAV1; the interaction forms a stable heterooligomeric complex that is required for targeting to lipid rafts and for caveolae formation. Tyrosine phosphorylated forms do not form heterooligomers with the Tyr-19-phosphorylated form existing as a monomer or dimer, and the Tyr-27-form as a monomer only. Interacts (tyrosine phosphorylated form) with the SH2 domain-containing proteins, RASA1, NCK1 and SRC. Interacts (tyrosine phosphorylated form) with INSR, the interaction (Tyr-27-phosphorylated form) is increased on insulin stimulation. Interacts (Tyr-19 phosphorylated form) with MAPK1 (phosphorylated form); the interaction, promoted by insulin, leads to nuclear location and MAPK1 activation. Interacts with STAT3; the interaction is increased on insulin-induced tyrosine phosphorylation leading to STAT activation. Phosphorylated on serine and tyrosine residues. CAV1 promotes phosphorylation on Ser-23 which then targets the complex to the plasma membrane, lipid rafts and caveolae. Phosphorylation on both Tyr-19 and Tyr-27 is required for insulin-induced 'Ser-727' phosphorylation of STAT3 and its activation. Phosphorylation on Tyr-19 is required for insulin-induced phosphorylation of MAPK1 and DNA binding of STAT3. Tyrosine phosphorylation is induced by both EGF and insulin. In terms of tissue distribution, expressed in aortic endothelial cells.

It is found in the nucleus. Its subcellular location is the cytoplasm. It localises to the golgi apparatus membrane. The protein resides in the cell membrane. The protein localises to the membrane. It is found in the caveola. Functionally, may act as a scaffolding protein within caveolar membranes. Interacts directly with G-protein alpha subunits and can functionally regulate their activity. Acts as an accessory protein in conjunction with CAV1 in targeting to lipid rafts and driving caveolae formation. Positive regulator of cellular mitogenesis of the MAPK signaling pathway. Required for the insulin-stimulated nuclear translocation and activation of MAPK1 and STAT3, and the subsequent regulation of cell cycle progression. This is Caveolin-2 (CAV2) from Bos taurus (Bovine).